A 444-amino-acid polypeptide reads, in one-letter code: Elongation factor 1-alpha (444 aa).

In terms of domain architecture, tr-type G spans 15 to 238 (KPHINLAVVG…DSFQPPQRPV (224 aa)). The tract at residues 24-31 (GHVDNGKS) is G1. 24 to 31 (GHVDNGKS) contributes to the GTP binding site. Mg(2+) is bound at residue S31. Positions 80–84 (GVTIE) are G2. Positions 101-104 (DLPG) are G3. GTP contacts are provided by residues 101–105 (DLPGH) and 163–166 (NKMD). Positions 163–166 (NKMD) are G4. The G5 stretch occupies residues 202–204 (SAI).

This sequence belongs to the TRAFAC class translation factor GTPase superfamily. Classic translation factor GTPase family. EF-Tu/EF-1A subfamily.

The protein resides in the cytoplasm. The enzyme catalyses GTP + H2O = GDP + phosphate + H(+). In terms of biological role, GTP hydrolase that promotes the GTP-dependent binding of aminoacyl-tRNA to the A-site of ribosomes during protein biosynthesis. In Pyrobaculum aerophilum (strain ATCC 51768 / DSM 7523 / JCM 9630 / CIP 104966 / NBRC 100827 / IM2), this protein is Elongation factor 1-alpha.